The chain runs to 186 residues: Probable chorismate pyruvate-lyase (186 aa).

Substrate contacts are provided by R80, L118, and E170.

This sequence belongs to the UbiC family.

It localises to the cytoplasm. It catalyses the reaction chorismate = 4-hydroxybenzoate + pyruvate. It participates in cofactor biosynthesis; ubiquinone biosynthesis. In terms of biological role, removes the pyruvyl group from chorismate, with concomitant aromatization of the ring, to provide 4-hydroxybenzoate (4HB) for the ubiquinone pathway. In Pseudomonas syringae pv. tomato (strain ATCC BAA-871 / DC3000), this protein is Probable chorismate pyruvate-lyase.